We begin with the raw amino-acid sequence, 397 residues long: MGIKHCCYILYFTLALVTLVQAGRLGEEVDILPSPNDTRRSLQGCEAHNIIDKCWRCKPDWAENRQALGNCAQGFGKATHGGKWGDIYMVTSDQDDDVVNPKEGTLRFGATQDRPLWIIFQRDMIIYLQQEMVVTSDKTIDGRGAKVELVYGGITLMNVKNVIIHNIDIHDVRVLPGGRIKSNGGPAIPRHQSDGDAIHVTGSSDIWIDHCTLSKSFDGLVDVNWGSTGVTISNCKFTHHEKAVLLGASDTHFQDLKMHVTLAYNIFTNTVHERMPRCRFGFFQIVNNFYDRWDKYAIGGSSNPTILSQGNKFVAPDFIYKKNVCLRTGAQEPEWMTWNWRTQNDVLENGAIFVASGSDPVLTAEQNAGMMQAEPGDMVPQLTMNAGVLTCSPGAPC.

An N-terminal signal peptide occupies residues 1-25 (MGIKHCCYILYFTLALVTLVQAGRL). N-linked (GlcNAc...) asparagine glycosylation occurs at Asn-36. An intrachain disulfide couples Cys-54 to Cys-71. PbH1 repeat units follow at residues 159-202 (VKNV…HVTG), 203-224 (SSDI…VDVN), and 227-248 (STGV…LLGA). 3 residues coordinate Ca(2+): Asp-194, Asp-218, and Asp-222. Arg-274 is an active-site residue.

Belongs to the polysaccharide lyase 1 family. Amb a subfamily. Monomer. The cofactor is Ca(2+). In terms of processing, the N-terminus is blocked. In terms of tissue distribution, pollen and flowers.

The catalysed reaction is Eliminative cleavage of (1-&gt;4)-alpha-D-galacturonan to give oligosaccharides with 4-deoxy-alpha-D-galact-4-enuronosyl groups at their non-reducing ends.. The protein operates within glycan metabolism; pectin degradation; 2-dehydro-3-deoxy-D-gluconate from pectin: step 2/5. In terms of biological role, has pectate lyase activity. In Ambrosia artemisiifolia (Common ragweed), this protein is Pectate lyase 4.